Consider the following 427-residue polypeptide: Glutamate-1-semialdehyde 2,1-aminomutase (427 aa).

Lys-265 carries the N6-(pyridoxal phosphate)lysine modification.

This sequence belongs to the class-III pyridoxal-phosphate-dependent aminotransferase family. HemL subfamily. Homodimer. Requires pyridoxal 5'-phosphate as cofactor.

The protein localises to the cytoplasm. It catalyses the reaction (S)-4-amino-5-oxopentanoate = 5-aminolevulinate. Its pathway is porphyrin-containing compound metabolism; protoporphyrin-IX biosynthesis; 5-aminolevulinate from L-glutamyl-tRNA(Glu): step 2/2. The protein is Glutamate-1-semialdehyde 2,1-aminomutase of Pseudomonas savastanoi pv. phaseolicola (strain 1448A / Race 6) (Pseudomonas syringae pv. phaseolicola (strain 1448A / Race 6)).